Reading from the N-terminus, the 547-residue chain is Chaperonin GroEL (547 aa).

ATP contacts are provided by residues 30–33 (TLGP), lysine 51, 87–91 (DGTTT), glycine 415, and aspartate 496.

The protein belongs to the chaperonin (HSP60) family. Forms a cylinder of 14 subunits composed of two heptameric rings stacked back-to-back. Interacts with the co-chaperonin GroES.

The protein resides in the cytoplasm. It catalyses the reaction ATP + H2O + a folded polypeptide = ADP + phosphate + an unfolded polypeptide.. Together with its co-chaperonin GroES, plays an essential role in assisting protein folding. The GroEL-GroES system forms a nano-cage that allows encapsulation of the non-native substrate proteins and provides a physical environment optimized to promote and accelerate protein folding. This Chlorobium limicola (strain DSM 245 / NBRC 103803 / 6330) protein is Chaperonin GroEL.